The primary structure comprises 476 residues: Eukaryotic translation initiation factor 3 subunit L (476 aa).

In terms of domain architecture, PCI spans 257 to 452 (DAIRMFSHIL…DLDYALENDL (196 aa)).

The protein belongs to the eIF-3 subunit L family. Component of the eukaryotic translation initiation factor 3 (eIF-3) complex.

It is found in the cytoplasm. Component of the eukaryotic translation initiation factor 3 (eIF-3) complex, which is involved in protein synthesis of a specialized repertoire of mRNAs and, together with other initiation factors, stimulates binding of mRNA and methionyl-tRNAi to the 40S ribosome. The eIF-3 complex specifically targets and initiates translation of a subset of mRNAs involved in cell proliferation. The polypeptide is Eukaryotic translation initiation factor 3 subunit L (Neosartorya fischeri (strain ATCC 1020 / DSM 3700 / CBS 544.65 / FGSC A1164 / JCM 1740 / NRRL 181 / WB 181) (Aspergillus fischerianus)).